Consider the following 143-residue polypeptide: Large ribosomal subunit protein uL16 (143 aa).

Positions methionine 1 to methionine 17 are enriched in basic residues. The segment at methionine 1–asparagine 25 is disordered.

It belongs to the universal ribosomal protein uL16 family. As to quaternary structure, part of the 50S ribosomal subunit.

Binds 23S rRNA and is also seen to make contacts with the A and possibly P site tRNAs. This chain is Large ribosomal subunit protein uL16, found in Azobacteroides pseudotrichonymphae genomovar. CFP2.